Here is a 137-residue protein sequence, read N- to C-terminus: Small ribosomal subunit protein uS9 (137 aa).

Over residues 105–117 (LKIEGHLSRDPRA) the composition is skewed to basic and acidic residues. Residues 105 to 137 (LKIEGHLSRDPRAKERRKYGLKKARKAPQFSKR) form a disordered region. The segment covering 118 to 137 (KERRKYGLKKARKAPQFSKR) has biased composition (basic residues).

Belongs to the universal ribosomal protein uS9 family.

In Prochlorococcus marinus (strain MIT 9211), this protein is Small ribosomal subunit protein uS9.